The following is a 799-amino-acid chain: Cadherin-8 (799 aa).

The signal sequence occupies residues 1 to 29 (MPERLAETLMDLWTPLIILWITLPSCVYT). The propeptide occupies 30 to 61 (APMNQAHVLTTGSPLELSRQSEDMRILSRSKR). 5 Cadherin domains span residues 62-167 (GWVW…APEF), 168-276 (LNGP…PPKF), 277-391 (AQSL…PPVF), 392-494 (SSPT…DNAP), and 495-616 (EFAS…YVLP). Residues 62–621 (GWVWNQMFVL…AYVLPIGLSM (560 aa)) lie on the Extracellular side of the membrane. Asn188 carries an N-linked (GlcNAc...) asparagine glycan. N-linked (GlcNAc...) asparagine glycans are attached at residues Asn463, Asn473, and Asn544. A helical transmembrane segment spans residues 622 to 642 (GALIAILACIILLLVIVVLFV). Residues 643 to 799 (TLRRHKNEPL…YSVGESDKET (157 aa)) are Cytoplasmic-facing. Ser795 is modified (phosphoserine).

It is found in the cell membrane. Its function is as follows. Cadherins are calcium-dependent cell adhesion proteins. They preferentially interact with themselves in a homophilic manner in connecting cells; cadherins may thus contribute to the sorting of heterogeneous cell types. This is Cadherin-8 (Cdh8) from Mus musculus (Mouse).